The sequence spans 260 residues: Proteasome subunit alpha (260 aa).

Belongs to the peptidase T1A family. The 20S proteasome core is composed of 14 alpha and 14 beta subunits that assemble into four stacked heptameric rings, resulting in a barrel-shaped structure. The two inner rings, each composed of seven catalytic beta subunits, are sandwiched by two outer rings, each composed of seven alpha subunits. The catalytic chamber with the active sites is on the inside of the barrel. Has a gated structure, the ends of the cylinder being occluded by the N-termini of the alpha-subunits. Is capped at one or both ends by the proteasome regulatory ATPase, PAN.

The protein resides in the cytoplasm. Its activity is regulated as follows. The formation of the proteasomal ATPase PAN-20S proteasome complex, via the docking of the C-termini of PAN into the intersubunit pockets in the alpha-rings, triggers opening of the gate for substrate entry. Interconversion between the open-gate and close-gate conformations leads to a dynamic regulation of the 20S proteasome proteolysis activity. In terms of biological role, component of the proteasome core, a large protease complex with broad specificity involved in protein degradation. The chain is Proteasome subunit alpha from Pyrococcus abyssi (strain GE5 / Orsay).